Reading from the N-terminus, the 319-residue chain is HTH-type transcriptional regulator YidZ (319 aa).

The 58-residue stretch at 8–65 (LDLNLLLCLQLLMQERSVTKAAKRMNVTPSAVSKSLAKLRAWFDDPLFVNTPLGLAPT) folds into the HTH lysR-type domain. Positions 25 to 44 (VTKAAKRMNVTPSAVSKSLA) form a DNA-binding region, H-T-H motif.

This sequence belongs to the LysR transcriptional regulatory family.

Involved in anaerobic NO protection. This chain is HTH-type transcriptional regulator YidZ, found in Salmonella typhi.